The sequence spans 274 residues: D-aminoacyl-tRNA deacylase (274 aa).

This sequence belongs to the DtdA deacylase family. As to quaternary structure, monomer. Zn(2+) serves as cofactor.

It catalyses the reaction a D-aminoacyl-tRNA + H2O = a tRNA + a D-alpha-amino acid + H(+). The catalysed reaction is glycyl-tRNA(Ala) + H2O = tRNA(Ala) + glycine + H(+). Its function is as follows. D-aminoacyl-tRNA deacylase with broad substrate specificity. By recycling D-aminoacyl-tRNA to D-amino acids and free tRNA molecules, this enzyme counteracts the toxicity associated with the formation of D-aminoacyl-tRNA entities in vivo. The protein is D-aminoacyl-tRNA deacylase of Pyrococcus horikoshii (strain ATCC 700860 / DSM 12428 / JCM 9974 / NBRC 100139 / OT-3).